The primary structure comprises 452 residues: tRNA modification GTPase MnmE (452 aa).

3 residues coordinate (6S)-5-formyl-5,6,7,8-tetrahydrofolate: Arg21, Glu78, and Lys118. The region spanning 214 to 375 is the TrmE-type G domain; it reads GMKVVIAGRP…LREHLKQSMG (162 aa). Asn224 is a K(+) binding site. Residues 224 to 229, 243 to 249, 268 to 271, and 333 to 336 contribute to the GTP site; these read NAGKSS, TDIAGTT, DTAG, and NKAD. Residue Ser228 participates in Mg(2+) binding. Positions 243, 245, and 248 each coordinate K(+). Thr249 contacts Mg(2+). Lys452 lines the (6S)-5-formyl-5,6,7,8-tetrahydrofolate pocket.

The protein belongs to the TRAFAC class TrmE-Era-EngA-EngB-Septin-like GTPase superfamily. TrmE GTPase family. As to quaternary structure, homodimer. Heterotetramer of two MnmE and two MnmG subunits. K(+) serves as cofactor.

The protein resides in the cytoplasm. In terms of biological role, exhibits a very high intrinsic GTPase hydrolysis rate. Involved in the addition of a carboxymethylaminomethyl (cmnm) group at the wobble position (U34) of certain tRNAs, forming tRNA-cmnm(5)s(2)U34. In Pasteurella multocida (strain Pm70), this protein is tRNA modification GTPase MnmE.